Consider the following 86-residue polypeptide: Small ribosomal subunit protein bS20 (86 aa).

It belongs to the bacterial ribosomal protein bS20 family.

Binds directly to 16S ribosomal RNA. This chain is Small ribosomal subunit protein bS20, found in Kocuria rhizophila (strain ATCC 9341 / DSM 348 / NBRC 103217 / DC2201).